Consider the following 183-residue polypeptide: Inner membrane-spanning protein YciB (183 aa).

5 helical membrane passes run 22 to 42 (IYAA…ITYL), 50 to 70 (MHLA…FFHD), 72 to 92 (AFIK…LIAS), 118 to 138 (VTWY…YIAF), and 148 to 168 (FKVF…VVYL).

It belongs to the YciB family.

Its subcellular location is the cell inner membrane. In terms of biological role, plays a role in cell envelope biogenesis, maintenance of cell envelope integrity and membrane homeostasis. The chain is Inner membrane-spanning protein YciB from Shewanella frigidimarina (strain NCIMB 400).